The primary structure comprises 159 residues: Ribosomal RNA large subunit methyltransferase H (159 aa).

S-adenosyl-L-methionine-binding positions include Leu76, Gly108, and Phe127–Phe132.

The protein belongs to the RNA methyltransferase RlmH family. In terms of assembly, homodimer.

It is found in the cytoplasm. It catalyses the reaction pseudouridine(1915) in 23S rRNA + S-adenosyl-L-methionine = N(3)-methylpseudouridine(1915) in 23S rRNA + S-adenosyl-L-homocysteine + H(+). In terms of biological role, specifically methylates the pseudouridine at position 1915 (m3Psi1915) in 23S rRNA. This is Ribosomal RNA large subunit methyltransferase H from Geobacillus kaustophilus (strain HTA426).